The chain runs to 86 residues: Small ribosomal subunit protein bS20 (86 aa).

Residues 1-25 form a disordered region; sequence MANIKSQMKRIKTNEANRQRNKAVK.

The protein belongs to the bacterial ribosomal protein bS20 family.

Its function is as follows. Binds directly to 16S ribosomal RNA. This Saccharopolyspora erythraea (strain ATCC 11635 / DSM 40517 / JCM 4748 / NBRC 13426 / NCIMB 8594 / NRRL 2338) protein is Small ribosomal subunit protein bS20.